The sequence spans 129 residues: Small ribosomal subunit protein uS11 (129 aa).

The protein belongs to the universal ribosomal protein uS11 family. Part of the 30S ribosomal subunit. Interacts with proteins S7 and S18. Binds to IF-3.

In terms of biological role, located on the platform of the 30S subunit, it bridges several disparate RNA helices of the 16S rRNA. Forms part of the Shine-Dalgarno cleft in the 70S ribosome. The polypeptide is Small ribosomal subunit protein uS11 (Pasteurella multocida (strain Pm70)).